We begin with the raw amino-acid sequence, 116 residues long: T cell receptor alpha variable 14/delta variable 4 (116 aa).

The signal sequence occupies residues methionine 1–alanine 21. One can recognise an Ig-like domain in the interval glutamine 22–glutamate 116. Cysteine 43 and cysteine 112 are disulfide-bonded. N-linked (GlcNAc...) asparagine glycosylation is present at asparagine 78.

In terms of assembly, alpha-beta TR is a heterodimer composed of an alpha and beta chain; disulfide-linked. The alpha-beta TR is associated with the transmembrane signaling CD3 coreceptor proteins to form the TR-CD3 (TcR or TCR). The assembly of alpha-beta TR heterodimers with CD3 occurs in the endoplasmic reticulum where a single alpha-beta TR heterodimer associates with one CD3D-CD3E heterodimer, one CD3G-CD3E heterodimer and one CD247 homodimer forming a stable octameric structure. CD3D-CD3E and CD3G-CD3E heterodimers preferentially associate with TR alpha and TR beta chains, respectively. The association of the CD247 homodimer is the last step of TcR assembly in the endoplasmic reticulum and is required for transport to the cell surface.

It is found in the cell membrane. Functionally, v region of the variable domain of T cell receptor (TR) alpha chain that participates in the antigen recognition. Alpha-beta T cell receptors are antigen specific receptors which are essential to the immune response and are present on the cell surface of T lymphocytes. Recognize peptide-major histocompatibility (MH) (pMH) complexes that are displayed by antigen presenting cells (APC), a prerequisite for efficient T cell adaptive immunity against pathogens. Binding of alpha-beta TR to pMH complex initiates TR-CD3 clustering on the cell surface and intracellular activation of LCK that phosphorylates the ITAM motifs of CD3G, CD3D, CD3E and CD247 enabling the recruitment of ZAP70. In turn ZAP70 phosphorylates LAT, which recruits numerous signaling molecules to form the LAT signalosome. The LAT signalosome propagates signal branching to three major signaling pathways, the calcium, the mitogen-activated protein kinase (MAPK) kinase and the nuclear factor NF-kappa-B (NF-kB) pathways, leading to the mobilization of transcription factors that are critical for gene expression and essential for T cell growth and differentiation. The T cell repertoire is generated in the thymus, by V-(D)-J rearrangement. This repertoire is then shaped by intrathymic selection events to generate a peripheral T cell pool of self-MH restricted, non-autoaggressive T cells. Post-thymic interaction of alpha-beta TR with the pMH complexes shapes TR structural and functional avidity. This is T cell receptor alpha variable 14/delta variable 4 from Homo sapiens (Human).